The following is a 1875-amino-acid chain: Protein MLP1 (1875 aa).

Residue S2 is modified to N-acetylserine. Coiled coils occupy residues 69-487 (ELKA…IQYL) and 531-1678 (ERLV…SAES). T337 is subject to Phosphothreonine. Position 379 is a phosphoserine (S379). Residues 1496 to 1565 (QPSNINMEEI…EEKVEERIKS (70 aa)) carry the Required for nuclear localization motif. A disordered region spans residues 1641–1689 (KKSFDEGKQQAMMKTTLLERKLAKMESQLSETKQSAESPPKSVNNVQNP). Positions 1667–1688 (SQLSETKQSAESPPKSVNNVQN) are enriched in polar residues. 2 positions are modified to phosphoserine: S1670 and S1710. Residues 1716–1725 (KLNSKSSSGG) show a composition bias toward low complexity. Residues 1716-1875 (KLNSKSSSGG…TDKVNDENSI (160 aa)) form a disordered region. Residues 1728 to 1737 (PFTSPSPNKH) are compositionally biased toward polar residues. S1733 bears the Phosphoserine mark. Basic and acidic residues predominate over residues 1738-1748 (LQNDNDKRESL). The segment covering 1787 to 1801 (TSNNPAQKDSSNRNV) has biased composition (polar residues). S1803 bears the Phosphoserine mark. Composition is skewed to basic and acidic residues over residues 1807–1840 (TEKK…GELK) and 1865–1875 (ETDKVNDENSI). The stretch at 1834–1866 (DEVGELKNDEDDTTENINESKKIKTEDEEEKET) forms a coiled coil.

In terms of assembly, component of the nuclear pore complex (NPC). NPC constitutes the exclusive means of nucleocytoplasmic transport. NPCs allow the passive diffusion of ions and small molecules and the active, nuclear transport receptor-mediated bidirectional transport of macromolecules such as proteins, RNAs, ribonucleoparticles (RNPs), and ribosomal subunits across the nuclear envelope. Due to its 8-fold rotational symmetry, all subunits are present with 8 copies or multiples thereof. Interacts with NAB2, a hnRNP required for mRNA export. Interacts with MLP2. May be phosphorylated by CDC28.

The protein localises to the nucleus. It localises to the nuclear pore complex. Its function is as follows. Together with the closely related MLP2, involved in the structural and functional organization of perinuclear chromatin. Together with MLP2, associates with the nuclear pore complex and form filamentous structures along the nuclear periphery. Has a role in the localization of Esc1 to nucleolar regions. Together with MLP2, mediates tethering of the some telomeres to the nuclear periphery, probably mediated by YKU70/YKU80 (HDF1/HDF2) heterodimer and show perinuclear location dependent silencing. MLP1 and MLP2 are involved in telomere length regulation but not silencing or telomere anchoring. Recognizes the 5'-splice site of pre-mRNAs and retains unspliced pre-mRNA in the nucleus without affecting splicing itself. The polypeptide is Protein MLP1 (MLP1) (Saccharomyces cerevisiae (strain ATCC 204508 / S288c) (Baker's yeast)).